A 140-amino-acid chain; its full sequence is MFLKSELLECNGSSVTLFQLSALQRIEHLEYLKQLEAVEVGDFQAAITFTVKSGAYLVAMSLWHGHPLKGSQGENAAAEVAKIQDEVMQTWPTELVAEAEYKVKLLSGMIAPVIDEPTSSGEERNEPAEPVTAEKPSPVS.

The tract at residues 114 to 140 (IDEPTSSGEERNEPAEPVTAEKPSPVS) is disordered.

It belongs to the lambda-like tail assembly protein family. In terms of assembly, interacts with the tail assembly protein GT and the tape measure protein.

The protein resides in the host cytoplasm. In terms of biological role, promotes tail assembly by creating a scaffold for the tail tube proteins. Tail assembly proteins G and GT probably wrap the linear tape measure protein to create a tail assembly scaffold. This allows the polymerization of the tail tube protein, during which G and GT are released, therefore they are absent in the mature virion. The tail assembly protein GT is produced by a rare -1 ribosomal frameshift. The ratio of translated G/GT is about 20, and this ratio is important for proper tail assembly. In Escherichia coli (Bacteriophage N15), this protein is Tail assembly protein G.